We begin with the raw amino-acid sequence, 1295 residues long: DNA (cytosine-5)-methyltransferase CMT2 (1295 aa).

3 disordered regions span residues 1–23 (MLSP…SSSR), 61–91 (RRST…GKSQ), and 249–287 (NSSK…GKGM). Positions 61–72 (RRSTTLNCNSPE) are enriched in polar residues. Residues 578 to 693 (HTFSLGDFAY…VEYSTFQTLR (116 aa)) enclose the BAH domain. The SAM-dependent MTase C5-type domain maps to 727 to 1268 (LPVLDLYSGC…YSLGMAFRGL (542 aa)). Residues 814-835 (SVNSTKETSGSSSSSDDDSDSE) form a disordered region. The region spanning 837 to 902 (YEVEKLVDIC…SGFKSKILPL (66 aa)) is the Chromo domain. Cys-915 is a catalytic residue.

Belongs to the class I-like SAM-binding methyltransferase superfamily. C5-methyltransferase family.

It localises to the nucleus. It carries out the reaction a 2'-deoxycytidine in DNA + S-adenosyl-L-methionine = a 5-methyl-2'-deoxycytidine in DNA + S-adenosyl-L-homocysteine + H(+). In terms of biological role, may be involved in the CpXpG methylation and in gene silencing. This chain is DNA (cytosine-5)-methyltransferase CMT2 (CMT2), found in Arabidopsis thaliana (Mouse-ear cress).